The following is a 296-amino-acid chain: 33 kDa chaperonin (296 aa).

2 cysteine pairs are disulfide-bonded: Cys-233-Cys-235 and Cys-267-Cys-270.

This sequence belongs to the HSP33 family. Post-translationally, under oxidizing conditions two disulfide bonds are formed involving the reactive cysteines. Under reducing conditions zinc is bound to the reactive cysteines and the protein is inactive.

Its subcellular location is the cytoplasm. Redox regulated molecular chaperone. Protects both thermally unfolding and oxidatively damaged proteins from irreversible aggregation. Plays an important role in the bacterial defense system toward oxidative stress. In Actinobacillus pleuropneumoniae serotype 3 (strain JL03), this protein is 33 kDa chaperonin.